The following is a 107-amino-acid chain: Parvalbumin beta 2 (107 aa).

An N-acetylserine modification is found at serine 1. 2 EF-hand domains span residues 37 to 72 (XSPDDLKKXXXXLDQDKSGFLEEDELKLFLQNFSAS) and 89 to 107 (DADGDGMLGLDEFAVLVKQ). Ca(2+)-binding residues include aspartate 50, aspartate 52, serine 54, phenylalanine 56, glutamate 58, glutamate 61, aspartate 89, aspartate 91, aspartate 93, methionine 95, and glutamate 100.

Belongs to the parvalbumin family.

In muscle, parvalbumin is thought to be involved in relaxation after contraction. It binds two calcium ions. The polypeptide is Parvalbumin beta 2 (Oncorhynchus mykiss (Rainbow trout)).